A 769-amino-acid chain; its full sequence is Spastin (769 aa).

A disordered region spans residues Met1–Gln100. Topologically, residues Met1–Pro113 are cytoplasmic. The tract at residues Met1 to Gly201 is required for localization to punctate cytoplasmic foci. Residues Ser8–Ser19 are compositionally biased toward low complexity. Gly residues predominate over residues Ser24–Ser33. A compositionally biased stretch (polar residues) spans Ser54–Arg63. A compositionally biased stretch (low complexity) spans Thr64 to Ser78. Residues Ile114–Tyr134 constitute an intramembrane region (helical). At Leu135–Ile769 the chain is on the cytoplasmic side. Residues Ser199–Ile769 form a sufficient for interaction with microtubules and microtubule severing region. Residues His224–Leu299 form the MIT domain. Positions Lys314–Ala462 are disordered. Residues Thr334–Ser344 show a composition bias toward low complexity. 2 stretches are compositionally biased toward polar residues: residues Asn395–Val413 and Gln434–Ile450. Low complexity predominate over residues Asn451–Ala462. The tract at residues Asn452–Leu466 is required for interaction with microtubules. ATP is bound at residue Gly534 to Thr541.

The protein belongs to the AAA ATPase family. Spastin subfamily. In terms of assembly, homohexamer. The homohexamer is stabilized by ATP-binding. The homohexamer may adopt a ring conformation through which microtubules pass prior to being severed. Interacts with microtubules. Interacts with atl; may be involved in microtubule dynamics.

It localises to the membrane. The protein localises to the cytoplasm. Its subcellular location is the cytoskeleton. The protein resides in the microtubule organizing center. It is found in the centrosome. It localises to the chromosome. The protein localises to the lipid droplet. It catalyses the reaction n ATP + n H2O + a microtubule = n ADP + n phosphate + (n+1) alpha/beta tubulin heterodimers.. Functionally, ATP-dependent microtubule severing protein. Stimulates microtubule minus-end depolymerization and poleward microtubule flux in the mitotic spindle. Regulates microtubule stability in the neuromuscular junction synapse. Involved in lipid metabolism by regulating the size and distribution of lipid droplets. Involved in axon regeneration by regulating microtubule severing. In Drosophila virilis (Fruit fly), this protein is Spastin.